An 83-amino-acid chain; its full sequence is Small ribosomal subunit protein bS16 (83 aa).

It belongs to the bacterial ribosomal protein bS16 family.

This is Small ribosomal subunit protein bS16 from Stutzerimonas stutzeri (strain A1501) (Pseudomonas stutzeri).